The primary structure comprises 428 residues: Adenylosuccinate synthetase (428 aa).

GTP contacts are provided by residues Gly13 to Lys19 and Gly41 to Thr43. Asp14 acts as the Proton acceptor in catalysis. The Mg(2+) site is built by Asp14 and Gly41. Residues Asp14–Lys17, Asn39–His42, Thr130, Arg144, Gln223, Thr238, and Arg302 contribute to the IMP site. Catalysis depends on His42, which acts as the Proton donor. Substrate is bound at residue Ala298–Arg304. GTP contacts are provided by residues Arg304, Lys330 to Asp332, and Ser412 to Gly414.

Belongs to the adenylosuccinate synthetase family. As to quaternary structure, homodimer. It depends on Mg(2+) as a cofactor.

Its subcellular location is the cytoplasm. The catalysed reaction is IMP + L-aspartate + GTP = N(6)-(1,2-dicarboxyethyl)-AMP + GDP + phosphate + 2 H(+). It participates in purine metabolism; AMP biosynthesis via de novo pathway; AMP from IMP: step 1/2. Plays an important role in the de novo pathway of purine nucleotide biosynthesis. Catalyzes the first committed step in the biosynthesis of AMP from IMP. In Dichelobacter nodosus (strain VCS1703A), this protein is Adenylosuccinate synthetase.